The primary structure comprises 406 residues: Suppressor protein SRP40 (406 aa).

Basic and acidic residues predominate over residues 1–25; the sequence is MASKKIKVDEVPKLSVKEKEIEEKS. The tract at residues 1 to 335 is disordered; the sequence is MASKKIKVDE…EIKEGQRKHF (335 aa). The span at 26–115 shows a compositional bias: low complexity; it reads SSSSSSSSSS…SSSSSSSSDE (90 aa). Residues 125-148 are compositionally biased toward basic and acidic residues; sequence ETKKRARESDNEDAKETKKAKTEP. Position 133 is a phosphoserine (Ser-133). Low complexity-rich tracts occupy residues 149-168, 176-186, 194-233, and 243-268; these read ESSS…SESE, DSSSSSSSSSD, DSQS…SSSD, and DSDS…SSDS. Residues 283–297 show a composition bias toward basic and acidic residues; it reads LETKEATADESKAEE. Thr-289 is modified (phosphothreonine). Ser-293 carries the post-translational modification Phosphoserine. Low complexity predominate over residues 298-316; sequence TPASSNESTPSASSSSSAN. Residues 325–335 show a composition bias toward basic and acidic residues; that stretch reads DEIKEGQRKHF. Ser-394 is modified (phosphoserine).

Pyrophosphorylated by 5-diphosphoinositol pentakisphosphate (5-IP7). Serine pyrophosphorylation is achieved by Mg(2+)-dependent, but enzyme independent transfer of a beta-phosphate from a inositol pyrophosphate to a pre-phosphorylated serine residue.

In terms of biological role, not known; weak suppressor of a mutant of the subunit AC40 of DNA dependent RNA polymerase I and III. The chain is Suppressor protein SRP40 (SRP40) from Saccharomyces cerevisiae (strain ATCC 204508 / S288c) (Baker's yeast).